We begin with the raw amino-acid sequence, 99 residues long: Putative RNA-binding protein RbpE (99 aa).

Positions 2–79 (SIYVGNLSYS…RVLKVNKARP (78 aa)) constitute an RRM domain. A disordered region spans residues 78 to 99 (RPREEKGARSGGGSWSRNNGGY). Gly residues predominate over residues 86–99 (RSGGGSWSRNNGGY).

This Nostoc sp. (strain PCC 7120 / SAG 25.82 / UTEX 2576) protein is Putative RNA-binding protein RbpE (rbpE).